The primary structure comprises 865 residues: Alanine--tRNA ligase (865 aa).

4 residues coordinate Zn(2+): His-554, His-558, Cys-656, and His-660.

This sequence belongs to the class-II aminoacyl-tRNA synthetase family. It depends on Zn(2+) as a cofactor.

It localises to the cytoplasm. The enzyme catalyses tRNA(Ala) + L-alanine + ATP = L-alanyl-tRNA(Ala) + AMP + diphosphate. In terms of biological role, catalyzes the attachment of alanine to tRNA(Ala) in a two-step reaction: alanine is first activated by ATP to form Ala-AMP and then transferred to the acceptor end of tRNA(Ala). Also edits incorrectly charged Ser-tRNA(Ala) and Gly-tRNA(Ala) via its editing domain. This is Alanine--tRNA ligase from Idiomarina loihiensis (strain ATCC BAA-735 / DSM 15497 / L2-TR).